The sequence spans 105 residues: Large ribosomal subunit protein P1 (105 aa).

Met1 is modified (blocked amino end (Met)). Residues 65-76 show a composition bias toward low complexity; sequence VAAPAGQQTQQA. Positions 65–105 are disordered; sequence VAAPAGQQTQQAAEKKEEKKEEEKKGPSEEEIGGGLSSLFG. The span at 77–92 shows a compositional bias: basic and acidic residues; it reads AEKKEEKKEEEKKGPS.

The protein belongs to the eukaryotic ribosomal protein P1/P2 family. As to quaternary structure, part of the 50S ribosomal subunit. Homodimer, it forms part of the ribosomal stalk which helps the ribosome interact with GTP-bound translation factors. Forms a heptameric uL10/P0(P1)2(P1)2(P1)2 complex, where uL10/P0 forms an elongated spine to which the P1 dimers bind in a sequential fashion.

Functionally, forms part of the ribosomal stalk, playing a central role in the interaction of the ribosome with GTP-bound translation factors. This chain is Large ribosomal subunit protein P1, found in Sulfolobus acidocaldarius (strain ATCC 33909 / DSM 639 / JCM 8929 / NBRC 15157 / NCIMB 11770).